The sequence spans 159 residues: Pathogenesis-related leaf protein 6 (159 aa).

The first 24 residues, M1–A24, serve as a signal peptide directing secretion. The residue at position 25 (Q25) is a Pyrrolidone carboxylic acid. Residues L32–Y147 form the SCP domain. 3 cysteine pairs are disulfide-bonded: C68/C136, C109/C115, and C131/C145.

The protein belongs to the CRISP family.

Probably involved in the defense reaction of plants against pathogens. Has antifungal activity. The protein is Pathogenesis-related leaf protein 6 (PR1B1) of Solanum lycopersicum (Tomato).